The sequence spans 88 residues: Putative carnobacteriocin-BM1 immunity protein (88 aa).

In terms of biological role, could impart immunity to carnobacteriocin-BM1 to naturally sensitive host strains. The polypeptide is Putative carnobacteriocin-BM1 immunity protein (Carnobacterium maltaromaticum (Carnobacterium piscicola)).